The following is a 153-amino-acid chain: Small ribosomal subunit protein bS16 (153 aa).

This sequence belongs to the bacterial ribosomal protein bS16 family.

The protein is Small ribosomal subunit protein bS16 of Leifsonia xyli subsp. xyli (strain CTCB07).